The chain runs to 217 residues: NADH-quinone oxidoreductase subunit I (217 aa).

The interval 22-41 (TTEQYPEEKKETAPRFHGRH) is disordered. 4Fe-4S ferredoxin-type domains are found at residues 43–73 (LNRH…VEGA) and 89–118 (RVYQ…MSND). 8 residues coordinate [4Fe-4S] cluster: C53, C56, C59, C63, C98, C101, C104, and C108. Residues 193-217 (ARRTAGEHSRADEVPAHGAGSERPR) form a disordered region.

This sequence belongs to the complex I 23 kDa subunit family. As to quaternary structure, NDH-1 is composed of 14 different subunits. Subunits NuoA, H, J, K, L, M, N constitute the membrane sector of the complex. [4Fe-4S] cluster is required as a cofactor.

The protein resides in the cell membrane. The enzyme catalyses a quinone + NADH + 5 H(+)(in) = a quinol + NAD(+) + 4 H(+)(out). In terms of biological role, NDH-1 shuttles electrons from NADH, via FMN and iron-sulfur (Fe-S) centers, to quinones in the respiratory chain. The immediate electron acceptor for the enzyme in this species is believed to be ubiquinone. Couples the redox reaction to proton translocation (for every two electrons transferred, four hydrogen ions are translocated across the cytoplasmic membrane), and thus conserves the redox energy in a proton gradient. This Frankia casuarinae (strain DSM 45818 / CECT 9043 / HFP020203 / CcI3) protein is NADH-quinone oxidoreductase subunit I.